The following is a 114-amino-acid chain: Iron-sulfur cluster insertion protein ErpA (114 aa).

Iron-sulfur cluster contacts are provided by C42, C106, and C108.

This sequence belongs to the HesB/IscA family. As to quaternary structure, homodimer. Iron-sulfur cluster serves as cofactor.

Its function is as follows. Required for insertion of 4Fe-4S clusters for at least IspG. The chain is Iron-sulfur cluster insertion protein ErpA from Sodalis glossinidius (strain morsitans).